A 407-amino-acid chain; its full sequence is Magnesium-protoporphyrin IX monomethyl ester [oxidative] cyclase 1, chloroplastic (407 aa).

Residues methionine 1–alanine 10 show a composition bias toward polar residues. The tract at residues methionine 1 to proline 28 is disordered.

The protein belongs to the AcsF family. It depends on Fe cation as a cofactor.

The protein localises to the plastid. Its subcellular location is the chloroplast thylakoid membrane. The enzyme catalyses Mg-protoporphyrin IX 13-monomethyl ester + 3 NADPH + 3 O2 + 2 H(+) = 3,8-divinyl protochlorophyllide a + 3 NADP(+) + 5 H2O. Its pathway is porphyrin-containing compound metabolism; chlorophyll biosynthesis. Catalyzes the formation of the isocyclic ring in chlorophyll biosynthesis under oxygen- and copper-deficient conditions. Mediates the cyclase reaction, which results in the formation of divinylprotochlorophyllide (Pchlide) characteristic of all chlorophylls from magnesium-protoporphyrin IX 13-monomethyl ester (MgPMME). This chain is Magnesium-protoporphyrin IX monomethyl ester [oxidative] cyclase 1, chloroplastic (CRD1), found in Chlamydomonas reinhardtii (Chlamydomonas smithii).